The chain runs to 520 residues: Arginine biosynthesis bifunctional protein ArgJ, chloroplastic (520 aa).

Residues Thr264, Lys290, Thr301, Glu388, Asn515, and Thr520 each contribute to the substrate site. Thr301 functions as the Nucleophile in the catalytic mechanism.

This sequence belongs to the ArgJ family. Heterodimer of an alpha and a beta chain.

It localises to the plastid. The protein resides in the chloroplast. It carries out the reaction N(2)-acetyl-L-ornithine + L-glutamate = N-acetyl-L-glutamate + L-ornithine. It catalyses the reaction L-glutamate + acetyl-CoA = N-acetyl-L-glutamate + CoA + H(+). It participates in amino-acid biosynthesis; L-arginine biosynthesis; L-ornithine and N-acetyl-L-glutamate from L-glutamate and N(2)-acetyl-L-ornithine (cyclic): step 1/1. It functions in the pathway amino-acid biosynthesis; L-arginine biosynthesis; N(2)-acetyl-L-ornithine from L-glutamate: step 1/4. Functionally, catalyzes two activities which are involved in the cyclic version of arginine biosynthesis: the synthesis of acetylglutamate from glutamate and acetyl-CoA, and of ornithine by transacetylation between acetylornithine and glutamate. The polypeptide is Arginine biosynthesis bifunctional protein ArgJ, chloroplastic (Physcomitrium patens (Spreading-leaved earth moss)).